Consider the following 229-residue polypeptide: UPF0758 protein GSU0386 (229 aa).

An MPN domain is found at Arg107–Leu229. Zn(2+) contacts are provided by His178, His180, and Asp191. The JAMM motif motif lies at His178 to Asp191.

This sequence belongs to the UPF0758 family.

This chain is UPF0758 protein GSU0386, found in Geobacter sulfurreducens (strain ATCC 51573 / DSM 12127 / PCA).